The primary structure comprises 312 residues: Pantothenate kinase (312 aa).

Gly97–Ser104 contacts ATP.

The protein belongs to the prokaryotic pantothenate kinase family.

It is found in the cytoplasm. The catalysed reaction is (R)-pantothenate + ATP = (R)-4'-phosphopantothenate + ADP + H(+). Its pathway is cofactor biosynthesis; coenzyme A biosynthesis; CoA from (R)-pantothenate: step 1/5. The protein is Pantothenate kinase of Mycolicibacterium vanbaalenii (strain DSM 7251 / JCM 13017 / BCRC 16820 / KCTC 9966 / NRRL B-24157 / PYR-1) (Mycobacterium vanbaalenii).